A 525-amino-acid polypeptide reads, in one-letter code: Keratin, type II cytoskeletal 4 (525 aa).

The segment at 1 to 145 (MIARQSSVRG…DPEIQKIRTA (145 aa)) is head. Position 13 is an omega-N-methylarginine (R13). Residues 146-181 (EREQIKTLNNKFASFIDKVRFLEQQNKVLETKWNLL) are coil 1A. In terms of domain architecture, IF rod spans 146 to 459 (EREQIKTLNN…KLLEGEECRM (314 aa)). The interval 182–200 (QQQTTTTSPKSLDPFFETY) is linker 1. Residues 201–292 (INALRKNLDT…VLYEAELAQM (92 aa)) are coil 1B. Residues 293–316 (QTHVSDTSVVLSMDNNRNLDLDGI) are linker 12. The tract at residues 317–455 (IAEVRAQYED…ATYRKLLEGE (139 aa)) is coil 2. The interval 456-524 (ECRMSGECKS…SSATITKRSP (69 aa)) is tail.

It belongs to the intermediate filament family. In terms of assembly, heterotetramer of two type I and two type II keratins. Keratin-4 is generally associated with keratin-13. As to expression, expressed in the dorsal and ventral epithelium of the tongue. Highest expression levels are detected in the suprabasal layer with low levels detected in the basal cell layer. Within the suprabasal layer expression is highest in the spinous cells, decreases in the granular cells and is not detected in the stratum corneum.

In Mus musculus (Mouse), this protein is Keratin, type II cytoskeletal 4 (Krt4).